The primary structure comprises 229 residues: Ribosomal RNA large subunit methyltransferase E (229 aa).

The disordered stretch occupies residues 1 to 20 (MSRAGNGGRQRIKTAKGRSA). S-adenosyl-L-methionine contacts are provided by Gly75, Trp77, Asp94, Asp110, and Asp134. The active-site Proton acceptor is Lys174.

The protein belongs to the class I-like SAM-binding methyltransferase superfamily. RNA methyltransferase RlmE family.

The protein resides in the cytoplasm. It carries out the reaction uridine(2552) in 23S rRNA + S-adenosyl-L-methionine = 2'-O-methyluridine(2552) in 23S rRNA + S-adenosyl-L-homocysteine + H(+). Specifically methylates the uridine in position 2552 of 23S rRNA at the 2'-O position of the ribose in the fully assembled 50S ribosomal subunit. The protein is Ribosomal RNA large subunit methyltransferase E of Rhizorhabdus wittichii (strain DSM 6014 / CCUG 31198 / JCM 15750 / NBRC 105917 / EY 4224 / RW1) (Sphingomonas wittichii).